We begin with the raw amino-acid sequence, 311 residues long: Pantothenate kinase (311 aa).

Position 93 to 100 (93 to 100) interacts with ATP; that stretch reads GSVAVGKS.

The protein belongs to the prokaryotic pantothenate kinase family.

Its subcellular location is the cytoplasm. The catalysed reaction is (R)-pantothenate + ATP = (R)-4'-phosphopantothenate + ADP + H(+). It participates in cofactor biosynthesis; coenzyme A biosynthesis; CoA from (R)-pantothenate: step 1/5. The sequence is that of Pantothenate kinase (coaA) from Haemophilus influenzae (strain ATCC 51907 / DSM 11121 / KW20 / Rd).